Here is a 159-residue protein sequence, read N- to C-terminus: UPF0336 protein ML1910 (159 aa).

Belongs to the UPF0336 family.

This is UPF0336 protein ML1910 from Mycobacterium leprae (strain TN).